A 511-amino-acid polypeptide reads, in one-letter code: Chromosomal replication initiator protein DnaA (511 aa).

Residues 1-87 (MSVELWQQCV…IGSKRSSAPR (87 aa)) form a domain I, interacts with DnaA modulators region. The segment at 87 to 174 (RAAPNAPLAA…QVEGALKHTS (88 aa)) is domain II. The interval 133 to 160 (VATHDEPSRDSFDPMAGASSQQAPARAE) is disordered. The segment covering 134–144 (ATHDEPSRDSF) has biased composition (basic and acidic residues). The interval 175–391 (YLNRTFTFEN…GALKRVIAHS (217 aa)) is domain III, AAA+ region. Positions 219, 221, 222, and 223 each coordinate ATP. Positions 392–511 (HFMGRDITIE…YKNLLRTLTT (120 aa)) are domain IV, binds dsDNA.

The protein belongs to the DnaA family. As to quaternary structure, oligomerizes as a right-handed, spiral filament on DNA at oriC.

The protein localises to the cytoplasm. In terms of biological role, plays an essential role in the initiation and regulation of chromosomal replication. ATP-DnaA binds to the origin of replication (oriC) to initiate formation of the DNA replication initiation complex once per cell cycle. Binds the DnaA box (a 9 base pair repeat at the origin) and separates the double-stranded (ds)DNA. Forms a right-handed helical filament on oriC DNA; dsDNA binds to the exterior of the filament while single-stranded (ss)DNA is stabiized in the filament's interior. The ATP-DnaA-oriC complex binds and stabilizes one strand of the AT-rich DNA unwinding element (DUE), permitting loading of DNA polymerase. After initiation quickly degrades to an ADP-DnaA complex that is not apt for DNA replication. Binds acidic phospholipids. In Pseudomonas syringae pv. tomato (strain ATCC BAA-871 / DC3000), this protein is Chromosomal replication initiator protein DnaA.